We begin with the raw amino-acid sequence, 88 residues long: Otospiralin (88 aa).

A signal peptide spans 1–21 (MQACMVPGLALCLLLGSLTEA).

The protein belongs to the otospiralin family. In terms of tissue distribution, ear specific.

It localises to the secreted. Functionally, may be essential for the survival of the neurosensory epithelium of the inner ear. This is Otospiralin (OTOS) from Cavia porcellus (Guinea pig).